Here is a 97-residue protein sequence, read N- to C-terminus: uncharacterized protein (97 aa).

This is an uncharacterized protein from Methanocaldococcus jannaschii (strain ATCC 43067 / DSM 2661 / JAL-1 / JCM 10045 / NBRC 100440) (Methanococcus jannaschii).